A 216-amino-acid polypeptide reads, in one-letter code: MOB kinase activator 3B (216 aa).

The Zn(2+) site is built by Cys82, Cys87, His164, and His169.

This sequence belongs to the MOB1/phocein family.

Functionally, modulates LATS1 expression in the Hippo signaling pathway which plays a pivotal role in organ size control and tumor suppression by restricting proliferation and promoting apoptosis. In Homo sapiens (Human), this protein is MOB kinase activator 3B.